The sequence spans 76 residues: Sec-independent protein translocase protein TatA (76 aa).

Residues 1–21 traverse the membrane as a helical segment; the sequence is MGSFSIWHWLIVLVIVALVFG. Basic and acidic residues-rich tracts occupy residues 39 to 50 and 64 to 76; these read FKDGMKGEDDKP and GTVD…KSNS. The segment at 39–76 is disordered; that stretch reads FKDGMKGEDDKPAAQNAAPSQVADKGTVDVEVKEKSNS.

Belongs to the TatA/E family. As to quaternary structure, the Tat system comprises two distinct complexes: a TatABC complex, containing multiple copies of TatA, TatB and TatC subunits, and a separate TatA complex, containing only TatA subunits. Substrates initially bind to the TatABC complex, which probably triggers association of the separate TatA complex to form the active translocon.

The protein localises to the cell inner membrane. Part of the twin-arginine translocation (Tat) system that transports large folded proteins containing a characteristic twin-arginine motif in their signal peptide across membranes. TatA could form the protein-conducting channel of the Tat system. In Herminiimonas arsenicoxydans, this protein is Sec-independent protein translocase protein TatA.